The chain runs to 411 residues: Kelch domain-containing protein 10 (411 aa).

Kelch repeat units lie at residues 72 to 133 (NLYV…LHGH), 135 to 186 (LLVF…IIHG), 187 to 239 (FLYV…HDGQ), 240 to 288 (RIYV…RRCH), 296 to 342 (EVFI…AVTP), and 345 to 388 (CMYI…YFPH).

The protein belongs to the KLHDC10 family. As to quaternary structure, component of a CRL2 E3 ubiquitin-protein ligase complex, also named ECS (Elongin BC-CUL2/5-SOCS-box protein) complex, composed of CUL2, Elongin BC (ELOB and ELOC), RBX1 and substrate-specific adapter KLHDC10.

It participates in protein modification; protein ubiquitination. Substrate-recognition component of a Cul2-RING (CRL2) E3 ubiquitin-protein ligase complex of the DesCEND (destruction via C-end degrons) pathway, which recognizes a C-degron located at the extreme C terminus of target proteins, leading to their ubiquitination and degradation. The C-degron recognized by the DesCEND pathway is usually a motif of less than ten residues and can be present in full-length proteins, truncated proteins or proteolytically cleaved forms. The CRL2(KLHDC10) complex specifically recognizes proteins with a proline-glycine (Pro-Gly) or an alanine tail (CAT tail) at the C-terminus, leading to their ubiquitination and degradation. The CRL2(KLHDC10) complex is involved in the ribosome-associated quality control (RQC) pathway, which mediates the extraction of incompletely synthesized nascent chains from stalled ribosomes: CRL2(KLHDC10) acts downstream of NEMF and recognizes CAT tails associated with stalled nascent chains, leading to their ubiquitination and degradation. This is Kelch domain-containing protein 10 from Xenopus tropicalis (Western clawed frog).